Reading from the N-terminus, the 243-residue chain is Ubiquinone/menaquinone biosynthesis C-methyltransferase UbiE (243 aa).

S-adenosyl-L-methionine is bound by residues Thr69, Asp90, and 116-117 (DA).

The protein belongs to the class I-like SAM-binding methyltransferase superfamily. MenG/UbiE family.

The enzyme catalyses a 2-demethylmenaquinol + S-adenosyl-L-methionine = a menaquinol + S-adenosyl-L-homocysteine + H(+). The catalysed reaction is a 2-methoxy-6-(all-trans-polyprenyl)benzene-1,4-diol + S-adenosyl-L-methionine = a 5-methoxy-2-methyl-3-(all-trans-polyprenyl)benzene-1,4-diol + S-adenosyl-L-homocysteine + H(+). Its pathway is quinol/quinone metabolism; menaquinone biosynthesis; menaquinol from 1,4-dihydroxy-2-naphthoate: step 2/2. It functions in the pathway cofactor biosynthesis; ubiquinone biosynthesis. Functionally, methyltransferase required for the conversion of demethylmenaquinol (DMKH2) to menaquinol (MKH2) and the conversion of 2-polyprenyl-6-methoxy-1,4-benzoquinol (DDMQH2) to 2-polyprenyl-3-methyl-6-methoxy-1,4-benzoquinol (DMQH2). In Paraburkholderia xenovorans (strain LB400), this protein is Ubiquinone/menaquinone biosynthesis C-methyltransferase UbiE.